A 288-amino-acid polypeptide reads, in one-letter code: Aquaporin PIP 1-3 (288 aa).

A disordered region spans residues 1–30 (MEGKEEDVRLGANRYTERQPIGTAAQGAEE). Helical transmembrane passes span 57–77 (IAEF…VMGV) and 92–114 (IAWS…SGGH). The NPA 1 signature appears at 116-118 (NPA). A run of 3 helical transmembrane segments spans residues 135-155 (VFYM…VKGF), 177-197 (GDGL…VFSA), and 211-231 (ILAP…TIPI). Residues 237–239 (NPA) carry the NPA 2 motif. Residues 259–279 (IFWVGPFIGAALAAIYHVVVI) form a helical membrane-spanning segment.

It belongs to the MIP/aquaporin (TC 1.A.8) family. PIP (TC 1.A.8.11) subfamily. In terms of tissue distribution, expressed in roots and leaves.

The protein localises to the cell membrane. In terms of biological role, water channel required to facilitate the transport of water across cell membrane. Increases the capacity for root water uptake under water deficit. May play a role in drought avoidance in upland rice. The sequence is that of Aquaporin PIP 1-3 (PIP1-3) from Oryza sativa subsp. japonica (Rice).